Consider the following 366-residue polypeptide: RNA 3'-terminal phosphate cyclase (366 aa).

ATP contacts are provided by Q104, P131, Y294, D297, Q298, and H320. H320 functions as the Tele-AMP-histidine intermediate in the catalytic mechanism.

Belongs to the RNA 3'-terminal cyclase family. Type 1 subfamily.

Its subcellular location is the nucleus. It localises to the nucleoplasm. It carries out the reaction a 3'-end 3'-phospho-ribonucleotide-RNA + ATP = a 3'-end 2',3'-cyclophospho-ribonucleotide-RNA + AMP + diphosphate. Functionally, catalyzes the conversion of 3'-phosphate to a 2',3'-cyclic phosphodiester at the end of RNA. The mechanism of action of the enzyme occurs in 3 steps: (A) adenylation of the enzyme by ATP; (B) transfer of adenylate to an RNA-N3'P to produce RNA-N3'PP5'A; (C) and attack of the adjacent 2'-hydroxyl on the 3'-phosphorus in the diester linkage to produce the cyclic end product. Likely functions in some aspects of cellular RNA processing. Function plays an important role in regulating axon regeneration by inhibiting central nervous system (CNS) axon regeneration following optic nerve injury. The polypeptide is RNA 3'-terminal phosphate cyclase (RTCA) (Bos taurus (Bovine)).